A 161-amino-acid chain; its full sequence is Protein translocase subunit SecE (161 aa).

The span at 1–12 (MSDEGDVADEAV) shows a compositional bias: acidic residues. Positions 1–80 (MSDEGDVADE…GVAKDDSTTK (80 aa)) are disordered. Residues 133 to 153 (VVLAFLAFMVALVAGADLGLT) form a helical membrane-spanning segment.

Belongs to the SecE/SEC61-gamma family. Component of the Sec protein translocase complex. Heterotrimer consisting of SecY, SecE and SecG subunits. The heterotrimers can form oligomers, although 1 heterotrimer is thought to be able to translocate proteins. Interacts with the ribosome. Interacts with SecDF, and other proteins may be involved. Interacts with SecA.

The protein resides in the cell membrane. In terms of biological role, essential subunit of the Sec protein translocation channel SecYEG. Clamps together the 2 halves of SecY. May contact the channel plug during translocation. This chain is Protein translocase subunit SecE, found in Mycobacterium bovis (strain ATCC BAA-935 / AF2122/97).